Here is a 451-residue protein sequence, read N- to C-terminus: Probable phosphoglucosamine mutase (451 aa).

Serine 96 acts as the Phosphoserine intermediate in catalysis. Mg(2+)-binding residues include serine 96, aspartate 233, aspartate 235, and aspartate 237. Position 96 is a phosphoserine (serine 96).

It belongs to the phosphohexose mutase family. The cofactor is Mg(2+). Post-translationally, activated by phosphorylation.

It carries out the reaction alpha-D-glucosamine 1-phosphate = D-glucosamine 6-phosphate. Functionally, catalyzes the conversion of glucosamine-6-phosphate to glucosamine-1-phosphate. The sequence is that of Probable phosphoglucosamine mutase from Pyrococcus horikoshii (strain ATCC 700860 / DSM 12428 / JCM 9974 / NBRC 100139 / OT-3).